Consider the following 979-residue polypeptide: Translation initiation factor IF-2 (979 aa).

Over residues 50 to 77 the composition is skewed to basic and acidic residues; it reads LKRSHGQSDDSARKKITLTKRETSEIRQ. Positions 50-385 are disordered; the sequence is LKRSHGQSDD…GKHNADDARS (336 aa). The span at 78-87 shows a compositional bias: polar residues; the sequence is SDSTGKTRTV. Composition is skewed to basic and acidic residues over residues 98–109, 121–142, and 149–173; these read IKRDDVESHGDG, EEVR…RQEA, and EAAE…RRQA. The span at 174-192 shows a compositional bias: low complexity; that stretch reads ELLAQKAAEEAAAAQAAAD. Composition is skewed to basic and acidic residues over residues 196–211, 219–263, and 280–291; these read ETAR…RLAT, NADD…EAEA, and PSERKAEEKKAE. Over residues 317 to 327 the composition is skewed to low complexity; sequence APAATTTTAAA. The segment covering 351–368 has biased composition (gly residues); sequence GGGLKTRGDSSGGVGGWR. In terms of domain architecture, tr-type G spans 479–646; the sequence is PRPPVVTVMG…NVLLQAEVLE (168 aa). The G1 stretch occupies residues 488–495; that stretch reads GHVDHGKT. Residue 488–495 participates in GTP binding; sequence GHVDHGKT. Residues 513 to 517 form a G2 region; sequence GITQH. Residues 534-537 are G3; that stretch reads DTPG. GTP is bound by residues 534 to 538 and 588 to 591; these read DTPGH and TKVD. The G4 stretch occupies residues 588-591; the sequence is TKVD. A G5 region spans residues 624 to 626; sequence SAK.

It belongs to the TRAFAC class translation factor GTPase superfamily. Classic translation factor GTPase family. IF-2 subfamily.

It is found in the cytoplasm. Its function is as follows. One of the essential components for the initiation of protein synthesis. Protects formylmethionyl-tRNA from spontaneous hydrolysis and promotes its binding to the 30S ribosomal subunits. Also involved in the hydrolysis of GTP during the formation of the 70S ribosomal complex. This Cupriavidus metallidurans (strain ATCC 43123 / DSM 2839 / NBRC 102507 / CH34) (Ralstonia metallidurans) protein is Translation initiation factor IF-2.